The primary structure comprises 75 residues: MANLPKEQKLLFQGKVTHVFNAQEYEVTLENGIKLNCHIAGKMKIHHIKIIIGDMVKVEISPYDLSKGRIVYRFK.

The S1-like domain occupies 1–75; that stretch reads MANLPKEQKL…SKGRIVYRFK (75 aa).

It belongs to the IF-1 family. As to quaternary structure, component of the 30S ribosomal translation pre-initiation complex which assembles on the 30S ribosome in the order IF-2 and IF-3, IF-1 and N-formylmethionyl-tRNA(fMet); mRNA recruitment can occur at any time during PIC assembly.

The protein resides in the cytoplasm. One of the essential components for the initiation of protein synthesis. Stabilizes the binding of IF-2 and IF-3 on the 30S subunit to which N-formylmethionyl-tRNA(fMet) subsequently binds. Helps modulate mRNA selection, yielding the 30S pre-initiation complex (PIC). Upon addition of the 50S ribosomal subunit IF-1, IF-2 and IF-3 are released leaving the mature 70S translation initiation complex. This is Translation initiation factor IF-1 from Mesomycoplasma hyopneumoniae (strain 232) (Mycoplasma hyopneumoniae).